We begin with the raw amino-acid sequence, 701 residues long: Polyribonucleotide nucleotidyltransferase (701 aa).

Residues aspartate 487 and aspartate 493 each contribute to the Mg(2+) site. The KH domain occupies 554–613; it reads PTMIAMKIDTDKIRDVIGKGGATIRAICEETKASIDIEDDGSIKIFGETKEAAEAAKQRI. The region spanning 623-691 is the S1 motif domain; it reads GKIYVGKVER…NRGRIKLSIK (69 aa).

It belongs to the polyribonucleotide nucleotidyltransferase family. Component of the RNA degradosome, which is a multiprotein complex involved in RNA processing and mRNA degradation. The cofactor is Mg(2+).

Its subcellular location is the cytoplasm. The catalysed reaction is RNA(n+1) + phosphate = RNA(n) + a ribonucleoside 5'-diphosphate. Its function is as follows. Involved in mRNA degradation. Catalyzes the phosphorolysis of single-stranded polyribonucleotides processively in the 3'- to 5'-direction. In Pseudomonas putida (strain GB-1), this protein is Polyribonucleotide nucleotidyltransferase.